Here is a 312-residue protein sequence, read N- to C-terminus: Coproporphyrin III ferrochelatase (312 aa).

Fe-coproporphyrin III-binding positions include Tyr-13, Arg-30, 46–47 (RY), Ser-54, and Tyr-125. His-183 and Glu-264 together coordinate Fe(2+).

Belongs to the ferrochelatase family.

Its subcellular location is the cytoplasm. It catalyses the reaction Fe-coproporphyrin III + 2 H(+) = coproporphyrin III + Fe(2+). It participates in porphyrin-containing compound metabolism; protoheme biosynthesis. Functionally, involved in coproporphyrin-dependent heme b biosynthesis. Catalyzes the insertion of ferrous iron into coproporphyrin III to form Fe-coproporphyrin III. The sequence is that of Coproporphyrin III ferrochelatase from Bacillus pumilus (strain SAFR-032).